The primary structure comprises 512 residues: Maturase K (512 aa).

It belongs to the intron maturase 2 family. MatK subfamily.

It is found in the plastid. It localises to the chloroplast. Its function is as follows. Usually encoded in the trnK tRNA gene intron. Probably assists in splicing its own and other chloroplast group II introns. This Lemna aequinoctialis (Lesser duckweed) protein is Maturase K.